Consider the following 318-residue polypeptide: tRNA methyltransferase 10 homolog B (318 aa).

A compositionally biased stretch (basic and acidic residues) spans 1 to 10; it reads MDCKSEESAQ. A disordered region spans residues 1–105; sequence MDCKSEESAQ…DPGNGTCPQH (105 aa). Residues 52 to 63 are compositionally biased toward polar residues; that stretch reads SPANSAVWSSKN. A compositionally biased stretch (basic residues) spans 64 to 83; the sequence is MQRKQRHWERIVSSKKSKRK. Positions 72 to 93 form a coiled coil; sequence ERIVSSKKSKRKQERERRKAKR. Positions 84 to 96 are enriched in basic and acidic residues; sequence QERERRKAKRAED. The 198-residue stretch at 114 to 311 folds into the SAM-dependent MTase TRM10-type domain; the sequence is TKEKLLEAKH…KGVSPGKGYV (198 aa).

It belongs to the class IV-like SAM-binding methyltransferase superfamily. TRM10 family.

The enzyme catalyses guanosine(9) in tRNA + S-adenosyl-L-methionine = N(1)-methylguanosine(9) in tRNA + S-adenosyl-L-homocysteine + H(+). Functionally, S-adenosyl-L-methionine-dependent guanine N(1)-methyltransferase that catalyzes the formation of N(1)-methylguanine at position 9 (m1G9) in tRNAs. Probably not able to catalyze formation of N(1)-methyladenine at position 9 (m1A9) in tRNAs. The polypeptide is tRNA methyltransferase 10 homolog B (Trmt10b) (Mus musculus (Mouse)).